Consider the following 285-residue polypeptide: UPF0173 metal-dependent hydrolase Pnuc_1524 (285 aa).

This sequence belongs to the UPF0173 family.

This Polynucleobacter asymbioticus (strain DSM 18221 / CIP 109841 / QLW-P1DMWA-1) (Polynucleobacter necessarius subsp. asymbioticus) protein is UPF0173 metal-dependent hydrolase Pnuc_1524.